The primary structure comprises 255 residues: MKGHVARKRFGQNFLVDQGIIAAIISAVDPKRDETVVEIGPGLGAITEPLMARVDHLHVIEIDRDLIARLKKQHTPERMTVHEGDALAFDFASIGKNLRLVGNLPYNISTPLLFHLAEYVDVVHDMHFMLQKEVVERMVAEPGNADFGRMSVMLQYRFYLEWLIDVPPESFDPPPKVQSAVVRLIPKPVSELNAKSQEKLSQVALTAFSQRRKMLRNTMKTLLSDAAFTELGIDPTCRPEDVSVEDYVRIANYLS.

6 residues coordinate S-adenosyl-L-methionine: N13, L15, G40, E61, D85, and N103.

Belongs to the class I-like SAM-binding methyltransferase superfamily. rRNA adenine N(6)-methyltransferase family. RsmA subfamily.

The protein localises to the cytoplasm. The enzyme catalyses adenosine(1518)/adenosine(1519) in 16S rRNA + 4 S-adenosyl-L-methionine = N(6)-dimethyladenosine(1518)/N(6)-dimethyladenosine(1519) in 16S rRNA + 4 S-adenosyl-L-homocysteine + 4 H(+). In terms of biological role, specifically dimethylates two adjacent adenosines (A1518 and A1519) in the loop of a conserved hairpin near the 3'-end of 16S rRNA in the 30S particle. May play a critical role in biogenesis of 30S subunits. The protein is Ribosomal RNA small subunit methyltransferase A of Dechloromonas aromatica (strain RCB).